Reading from the N-terminus, the 193-residue chain is Ion-translocating oxidoreductase complex subunit B (193 aa).

The tract at residues 1 to 26 (MSTMLIAVILLTLLALFFGVLLGFAA) is hydrophobic. The region spanning 32-90 (EGNPIVDELEAILPQTQCGQCGYPGCRPYAEAIANGDKVNKCPPGGTATMEKLASLMGV) is the 4Fe-4S domain. [4Fe-4S] cluster is bound by residues cysteine 49, cysteine 52, cysteine 57, cysteine 73, cysteine 114, cysteine 117, cysteine 120, cysteine 124, cysteine 144, cysteine 147, cysteine 150, and cysteine 154. 4Fe-4S ferredoxin-type domains lie at 105–134 (KVAYIREDECIGCTKCIQACPVDAIIGAGK) and 136–164 (MHTVLTADCTGCDLCVEPCPVDCIDMLPV).

This sequence belongs to the 4Fe4S bacterial-type ferredoxin family. RnfB subfamily. As to quaternary structure, the complex is composed of six subunits: RnfA, RnfB, RnfC, RnfD, RnfE and RnfG. [4Fe-4S] cluster serves as cofactor.

The protein localises to the cell inner membrane. Functionally, part of a membrane-bound complex that couples electron transfer with translocation of ions across the membrane. The chain is Ion-translocating oxidoreductase complex subunit B from Shewanella sp. (strain MR-4).